The following is a 2193-amino-acid chain: Genome polyprotein (2193 aa).

The segment at Met-1–Gly-22 is disordered. Gly-2 carries the N-myristoyl glycine; by host lipid modification. Residues Gly-2 to Gln-1503 lie on the Cytoplasmic side of the membrane. 2 amphipathic alpha-helix regions span residues Gly-566–Leu-588 and Gly-568–Leu-588. Active-site for protease 2A activity residues include His-883 and Asp-901. Residues Cys-918 and Cys-920 each coordinate Zn(2+). The For protease 2A activity role is filled by Cys-972. Positions 978 and 980 each coordinate Zn(2+). The segment at Ser-1112–Leu-1184 is membrane-binding. An oligomerization region spans residues Ser-1112–Thr-1250. An RNA-binding region spans residues Ser-1133–Ser-1137. Residues Glu-1216–Ala-1374 enclose the SF3 helicase domain. Gly-1240 to Ser-1247 provides a ligand contact to ATP. Cys-1381, Cys-1392, and Cys-1397 together coordinate Zn(2+). The C4-type; degenerate zinc finger occupies Cys-1381 to Cys-1397. The tract at residues Glu-1424–Ile-1431 is RNA-binding. The tract at residues Ile-1435–Gln-1440 is oligomerization. The stretch at Ser-1504–Tyr-1519 is an intramembrane region. Residues Lys-1520–Phe-2193 are Cytoplasmic-facing. At Tyr-1529 the chain carries O-(5'-phospho-RNA)-tyrosine. Residues Gly-1549–Phe-1727 form the Peptidase C3 domain. Residues His-1588, Glu-1619, and Cys-1695 each act as for protease 3C activity in the active site. A RdRp catalytic domain is found at Gly-1958–Leu-2073. Mg(2+) is bound by residues Asp-1964 and Asp-2060.

It belongs to the picornaviruses polyprotein family. Interacts with capsid protein VP1 and capsid protein VP3 to form heterotrimeric protomers. In terms of assembly, interacts with capsid protein VP0, and capsid protein VP3 to form heterotrimeric protomers. Five protomers subsequently associate to form pentamers which serve as building blocks for the capsid. Interacts with capsid protein VP2, capsid protein VP3 and capsid protein VP4 following cleavage of capsid protein VP0. As to quaternary structure, interacts with capsid protein VP1 and capsid protein VP3 in the mature capsid. Interacts with capsid protein VP0 and capsid protein VP1 to form heterotrimeric protomers. Five protomers subsequently associate to form pentamers which serve as building blocks for the capsid. Interacts with capsid protein VP4 in the mature capsid. Interacts with protein 2C; this interaction may be important for virion morphogenesis. In terms of assembly, interacts with capsid protein VP1 and capsid protein VP3. As to quaternary structure, homodimer. Homohexamer; forms a hexameric ring structure with 6-fold symmetry characteristic of AAA+ ATPases. Interacts (via N-terminus) with host RTN3 (via reticulon domain); this interaction is important for viral replication. Interacts with capsid protein VP3; this interaction may be important for virion morphogenesis. In terms of assembly, interacts with protein 3CD. As to quaternary structure, homodimer. Interacts with host GBF1. Interacts (via GOLD domain) with host ACBD3 (via GOLD domain); this interaction allows the formation of a viral protein 3A/ACBD3 heterotetramer with a 2:2 stoichiometry, which will stimulate the recruitment of host PI4KB in order to synthesize PI4P at the viral RNA replication sites. Interacts with RNA-directed RNA polymerase. In terms of assembly, interacts with host IFIH1/MDA5; this interaction inhibits host IFIH1. As to quaternary structure, interacts with protein 3AB and with RNA-directed RNA polymerase. Interacts with Viral protein genome-linked and with protein 3CD. Requires Mg(2+) as cofactor. In terms of processing, specific enzymatic cleavages in vivo by the viral proteases yield processing intermediates and the mature proteins. Post-translationally, myristoylation is required for the formation of pentamers during virus assembly. Further assembly of 12 pentamers and a molecule of genomic RNA generates the provirion. During virion maturation, immature virions are rendered infectious following cleavage of VP0 into VP4 and VP2. This maturation seems to be an autocatalytic event triggered by the presence of RNA in the capsid and it is followed by a conformational change infectious virion. In terms of processing, myristoylation is required during RNA encapsidation and formation of the mature virus particle. Post-translationally, VPg is uridylylated by the polymerase into VPg-pUpU. This acts as a nucleotide-peptide primer for the genomic RNA replication.

It is found in the virion. The protein resides in the host cytoplasm. It localises to the host cytoplasmic vesicle membrane. The protein localises to the host nucleus. The enzyme catalyses a ribonucleoside 5'-triphosphate + H2O = a ribonucleoside 5'-diphosphate + phosphate + H(+). It catalyses the reaction Selective cleavage of Tyr-|-Gly bond in the picornavirus polyprotein.. It carries out the reaction RNA(n) + a ribonucleoside 5'-triphosphate = RNA(n+1) + diphosphate. The catalysed reaction is Selective cleavage of Gln-|-Gly bond in the poliovirus polyprotein. In other picornavirus reactions Glu may be substituted for Gln, and Ser or Thr for Gly.. Replication or transcription is subject to high level of random mutations by the nucleotide analog ribavirin. Functionally, forms an icosahedral capsid of pseudo T=3 symmetry with capsid proteins VP2 and VP3. The capsid is 300 Angstroms in diameter, composed of 60 copies of each capsid protein and enclosing the viral positive strand RNA genome. Capsid protein VP1 mainly forms the vertices of the capsid. Capsid protein VP1 interacts with host cell receptor to provide virion attachment to target host cells. This attachment induces virion internalization. After binding to its receptor, the capsid undergoes conformational changes. Capsid protein VP1 N-terminus (that contains an amphipathic alpha-helix) and capsid protein VP4 are externalized. Together, they shape a pore in the host membrane through which viral genome is translocated to host cell cytoplasm. In terms of biological role, forms an icosahedral capsid of pseudo T=3 symmetry with capsid proteins VP2 and VP3. The capsid is 300 Angstroms in diameter, composed of 60 copies of each capsid protein and enclosing the viral positive strand RNA genome. Its function is as follows. Lies on the inner surface of the capsid shell. After binding to the host receptor, the capsid undergoes conformational changes. Capsid protein VP4 is released, Capsid protein VP1 N-terminus is externalized, and together, they shape a pore in the host membrane through which the viral genome is translocated into the host cell cytoplasm. Component of immature procapsids, which is cleaved into capsid proteins VP4 and VP2 after maturation. Allows the capsid to remain inactive before the maturation step. Functionally, cysteine protease that cleaves viral polyprotein and specific host proteins. It is responsible for the autocatalytic cleavage between the P1 and P2 regions, which is the first cleavage occurring in the polyprotein. Also cleaves the host translation initiation factor EIF4G1, in order to shut down the capped cellular mRNA translation. Inhibits the host nucleus-cytoplasm protein and RNA trafficking by cleaving host members of the nuclear pores. Counteracts stress granule formation probably by antagonizing its assembly or promoting its dissassembly. Cleaves and inhibits host IFIH1/MDA5, thereby inhibiting the type-I IFN production and the establishment of the antiviral state. Cleaves and inhibits host MAVS, thereby inhibiting the type-I IFN production and the establishment of the antiviral state. In terms of biological role, plays an essential role in the virus replication cycle by acting as a viroporin. Creates a pore in the host endoplasmic reticulum and as a consequence releases Ca2+ in the cytoplasm of infected cell. In turn, high levels of cytoplasmic calcium may trigger membrane trafficking and transport of viral ER-associated proteins to viroplasms, sites of viral genome replication. Its function is as follows. Induces and associates with structural rearrangements of intracellular membranes. Displays RNA-binding, nucleotide binding and NTPase activities. May play a role in virion morphogenesis and viral RNA encapsidation by interacting with the capsid protein VP3. Localizes the viral replication complex to the surface of membranous vesicles. Together with protein 3CD binds the Cis-Active RNA Element (CRE) which is involved in RNA synthesis initiation. Acts as a cofactor to stimulate the activity of 3D polymerase, maybe through a nucleid acid chaperone activity. Functionally, localizes the viral replication complex to the surface of membranous vesicles. It inhibits host cell endoplasmic reticulum-to-Golgi apparatus transport and causes the disassembly of the Golgi complex, possibly through GBF1 interaction. This would result in depletion of MHC, trail receptors and IFN receptors at the host cell surface. Plays an essential role in viral RNA replication by recruiting ACBD3 and PI4KB at the viral replication sites, thereby allowing the formation of the rearranged membranous structures where viral replication takes place. In terms of biological role, acts as a primer for viral RNA replication and remains covalently bound to viral genomic RNA. VPg is uridylylated prior to priming replication into VPg-pUpU. The oriI viral genomic sequence may act as a template for this. The VPg-pUpU is then used as primer on the genomic RNA poly(A) by the RNA-dependent RNA polymerase to replicate the viral genome. During genome replication, the VPg-RNA linkage is removed by the host TDP2, thereby accelerating replication. During the late stage of the replication cycle, host TDP2 is excluded from sites of viral RNA synthesis and encapsidation, allowing for the generation of progeny virions. Its function is as follows. Involved in the viral replication complex and viral polypeptide maturation. It exhibits protease activity with a specificity and catalytic efficiency that is different from protease 3C. Protein 3CD lacks polymerase activity. Protein 3CD binds to the 5'UTR of the viral genome. Major viral protease that mediates proteolytic processing of the polyprotein. Cleaves host EIF5B, contributing to host translation shutoff. Also cleaves host PABPC1, contributing to host translation shutoff. Binds and inhibits host IFIH1/MDA5, thereby inhibiting the type-I IFN production and the establishment of the antiviral state. Cleaves host MAP3K7/TAK1, resulting in inhibition of TRAF6-triggered NF-kappa-B induction. Cleaves host NLRP1, triggers host N-glycine-mediated degradation of the autoinhibitory NLRP1 N-terminal fragment. Functionally, replicates the viral genomic RNA on the surface of intracellular membranes. May form linear arrays of subunits that propagate along a strong head-to-tail interaction called interface-I. Covalently attaches UMP to a tyrosine of VPg, which is used to prime RNA synthesis. The positive stranded RNA genome is first replicated at virus induced membranous vesicles, creating a dsRNA genomic replication form. This dsRNA is then used as template to synthesize positive stranded RNA genomes. ss(+)RNA genomes are either translated, replicated or encapsidated. The protein is Genome polyprotein of Homo sapiens (Human).